The chain runs to 156 residues: Arginine repressor (156 aa).

It belongs to the ArgR family.

It is found in the cytoplasm. Its pathway is amino-acid biosynthesis; L-arginine biosynthesis [regulation]. In terms of biological role, regulates arginine biosynthesis genes. This Klebsiella pneumoniae (strain 342) protein is Arginine repressor.